We begin with the raw amino-acid sequence, 655 residues long: uncharacterized protein (655 aa).

Residues 5–25 (IIIIIFIVINFINIIISSITF) traverse the membrane as a helical segment. Disordered stretches follow at residues 337–363 (NSDY…NNNN) and 484–525 (DKIG…SDNS). Residues 515-524 (DNNSIGSSDN) show a composition bias toward low complexity. Residues 588–608 (ILAVTISAIGIICVALLLTVV) traverse the membrane as a helical segment.

Its subcellular location is the membrane. This is an uncharacterized protein from Dictyostelium discoideum (Social amoeba).